A 265-amino-acid chain; its full sequence is Tryptophan synthase alpha chain (265 aa).

Catalysis depends on proton acceptor residues glutamate 49 and aspartate 60.

It belongs to the TrpA family. Tetramer of two alpha and two beta chains.

The enzyme catalyses (1S,2R)-1-C-(indol-3-yl)glycerol 3-phosphate + L-serine = D-glyceraldehyde 3-phosphate + L-tryptophan + H2O. The protein operates within amino-acid biosynthesis; L-tryptophan biosynthesis; L-tryptophan from chorismate: step 5/5. In terms of biological role, the alpha subunit is responsible for the aldol cleavage of indoleglycerol phosphate to indole and glyceraldehyde 3-phosphate. The sequence is that of Tryptophan synthase alpha chain from Cupriavidus metallidurans (strain ATCC 43123 / DSM 2839 / NBRC 102507 / CH34) (Ralstonia metallidurans).